The following is a 103-amino-acid chain: Antitoxin VapB1 (103 aa).

Functionally, antitoxin component of a type II toxin-antitoxin (TA) system. Upon expression in E.coli neutralizes the effect of cognate toxin VapC1, partially inhibits the RNase activity of VapC1 in vitro. In Rickettsia felis (strain ATCC VR-1525 / URRWXCal2) (Rickettsia azadi), this protein is Antitoxin VapB1 (vapB1).